We begin with the raw amino-acid sequence, 276 residues long: SKA complex subunit 1 homolog (276 aa).

Positions 48 to 78 (VDVSLTAMEAQLQAVRRRLQEEREAFPKAKK) form a coiled coil.

The protein belongs to the SKA1 family.

This is SKA complex subunit 1 homolog from Oryza sativa subsp. indica (Rice).